Reading from the N-terminus, the 258-residue chain is tRNA pseudouridine synthase A (258 aa).

Asp53 serves as the catalytic Nucleophile. Tyr111 is a binding site for substrate.

It belongs to the tRNA pseudouridine synthase TruA family. Homodimer.

It carries out the reaction uridine(38/39/40) in tRNA = pseudouridine(38/39/40) in tRNA. In terms of biological role, formation of pseudouridine at positions 38, 39 and 40 in the anticodon stem and loop of transfer RNAs. The protein is tRNA pseudouridine synthase A of Streptococcus agalactiae serotype V (strain ATCC BAA-611 / 2603 V/R).